We begin with the raw amino-acid sequence, 246 residues long: Carboxylesterase (246 aa).

Catalysis depends on Ser-93, which acts as the Nucleophile. Residues Asp-192 and His-222 each act as charge relay system in the active site.

It belongs to the lipase/esterase LIP3/BchO family. As to quaternary structure, homodimer.

It carries out the reaction a carboxylic ester + H2O = an alcohol + a carboxylate + H(+). Involved in the detoxification of xenobiotics. Shows maximal activity with C6 substrates, with gradually decreasing activity from C8 to C12 substrates. No activity for higher chain length substrates acids rather than long-chain ones. In Geobacillus stearothermophilus (Bacillus stearothermophilus), this protein is Carboxylesterase (est).